Here is a 289-residue protein sequence, read N- to C-terminus: 2-dehydro-3-deoxyphosphooctonate aldolase (289 aa).

Belongs to the KdsA family.

It localises to the cytoplasm. It carries out the reaction D-arabinose 5-phosphate + phosphoenolpyruvate + H2O = 3-deoxy-alpha-D-manno-2-octulosonate-8-phosphate + phosphate. It functions in the pathway carbohydrate biosynthesis; 3-deoxy-D-manno-octulosonate biosynthesis; 3-deoxy-D-manno-octulosonate from D-ribulose 5-phosphate: step 2/3. The protein operates within bacterial outer membrane biogenesis; lipopolysaccharide biosynthesis. The protein is 2-dehydro-3-deoxyphosphooctonate aldolase of Cupriavidus taiwanensis (strain DSM 17343 / BCRC 17206 / CCUG 44338 / CIP 107171 / LMG 19424 / R1) (Ralstonia taiwanensis (strain LMG 19424)).